Here is a 281-residue protein sequence, read N- to C-terminus: Diaminopimelate epimerase (281 aa).

Positions 14 and 65 each coordinate substrate. Cysteine 74 serves as the catalytic Proton donor. Substrate is bound by residues 75 to 76, asparagine 165, asparagine 198, and 216 to 217; these read GN and ER. Cysteine 225 serves as the catalytic Proton acceptor. 226 to 227 is a binding site for substrate; that stretch reads GT.

It belongs to the diaminopimelate epimerase family. In terms of assembly, homodimer.

It localises to the cytoplasm. The catalysed reaction is (2S,6S)-2,6-diaminopimelate = meso-2,6-diaminopimelate. It participates in amino-acid biosynthesis; L-lysine biosynthesis via DAP pathway; DL-2,6-diaminopimelate from LL-2,6-diaminopimelate: step 1/1. Its function is as follows. Catalyzes the stereoinversion of LL-2,6-diaminopimelate (L,L-DAP) to meso-diaminopimelate (meso-DAP), a precursor of L-lysine and an essential component of the bacterial peptidoglycan. This is Diaminopimelate epimerase from Leptospira interrogans serogroup Icterohaemorrhagiae serovar copenhageni (strain Fiocruz L1-130).